The chain runs to 519 residues: Cytochrome P450 52E2 (519 aa).

Transmembrane regions (helical) follow at residues M10–I30 and P44–F64. C461 contributes to the heme binding site.

The protein belongs to the cytochrome P450 family. The cofactor is heme.

Its subcellular location is the membrane. In terms of biological role, together with an NADPH cytochrome P450 the enzyme system catalyzes the terminal hydroxylation as the first step in the assimilation of alkanes and fatty acids. This is Cytochrome P450 52E2 (CYP52E2) from Candida apicola (Yeast).